Reading from the N-terminus, the 398-residue chain is MSERVILAYSGGLDTSVAISWIGKETGREVVAVAIDLGQGGEDMEVVRQRALDCGAVEAVVVDARDEFAEGYCLPTILNNALYMDRYPLVSAISRPLIVKHLVEAAREHGGGIVAHGCTGKGNDQVRFEVGFASLAPDLEVLAPVRDYAWTREKAIAFAEENAIPINVTKRSPFSIDQNVWGRAVETGFLEHLWNAPTKDVYSYTEDPTVNWNTPDEVIVGFERGMPVSIDGNAVTMLQAIEELNRRAGAQGVGRLDVVEDRLVGIKSREIYEAPGAMVLITAHAELEHVTLERELARFKRHTDQRWAELVYDGLWYSPLKTALESFVAKTQEHVSGEIRLVLHGGHIAVNGRRSAESLYDFNLATYDEGDTFDQSAAKGFVYVHGLSSKLSARRDLQ.

Residue 8-16 (AYSGGLDTS) participates in ATP binding. An L-citrulline-binding site is contributed by Tyr-87. ATP is bound at residue Gly-117. Residues Thr-119, Asn-123, and Asp-124 each coordinate L-aspartate. L-citrulline is bound at residue Asn-123. L-citrulline-binding residues include Arg-127, Ser-175, Glu-260, and Tyr-272.

Belongs to the argininosuccinate synthase family. Type 1 subfamily. Homotetramer.

It is found in the cytoplasm. It carries out the reaction L-citrulline + L-aspartate + ATP = 2-(N(omega)-L-arginino)succinate + AMP + diphosphate + H(+). The protein operates within amino-acid biosynthesis; L-arginine biosynthesis; L-arginine from L-ornithine and carbamoyl phosphate: step 2/3. This chain is Argininosuccinate synthase, found in Mycobacterium marinum (strain ATCC BAA-535 / M).